Consider the following 366-residue polypeptide: tRNA/tmRNA (uracil-C(5))-methyltransferase (366 aa).

S-adenosyl-L-methionine is bound by residues Q190, Y218, N223, E239, and D299. Residue C324 is the Nucleophile of the active site. E358 serves as the catalytic Proton acceptor.

The protein belongs to the class I-like SAM-binding methyltransferase superfamily. RNA M5U methyltransferase family. TrmA subfamily.

The catalysed reaction is uridine(54) in tRNA + S-adenosyl-L-methionine = 5-methyluridine(54) in tRNA + S-adenosyl-L-homocysteine + H(+). It catalyses the reaction uridine(341) in tmRNA + S-adenosyl-L-methionine = 5-methyluridine(341) in tmRNA + S-adenosyl-L-homocysteine + H(+). Dual-specificity methyltransferase that catalyzes the formation of 5-methyluridine at position 54 (m5U54) in all tRNAs, and that of position 341 (m5U341) in tmRNA (transfer-mRNA). In Escherichia coli O157:H7, this protein is tRNA/tmRNA (uracil-C(5))-methyltransferase.